The sequence spans 1110 residues: Envelopment polyprotein (1110 aa).

A propeptide spanning residues 1 to 8 (MALKETDA) is cleaved from the precursor. The Lumenal portion of the chain corresponds to 1-290 (MALKETDAKI…KYSKNIYKQT (290 aa)). The Cell attachment site motif lies at 14–16 (RGD). N-linked (GlcNAc...) asparagine; by host glycosylation is found at Asn46 and Asn92. Cystine bridges form between Cys90-Cys121 and Cys98-Cys132. The interval 153–171 (IDNKRKLSIGTKFYIIESL) is non-covalent dimerization. The N-linked (GlcNAc...) asparagine; by host glycan is linked to Asn186. Cys200 and Cys261 are disulfide-bonded. The chain crosses the membrane as a helical span at residues 291-342 (ACINFSWFRLIMIALIVYFPIRYLVNKTSKTLFYGYDLLGLITYPILLLINY). The Cytoplasmic segment spans residues 343–459 (LWSYFPLKCK…VPGCDRFVTN (117 aa)). Topologically, residues 460 to 1044 (RYDKCPEKDQ…HFGSFFDTVR (585 aa)) are lumenal. N-linked (GlcNAc...) asparagine; by host glycans are attached at residues Asn566, Asn582, and Asn957. Residues 1045–1065 (VVLLILFVFALAYLCSIVATM) traverse the membrane as a helical segment. Residues 1066–1110 (CRGYVRNKSYKTKYIEDTNDYSLVSTSSGKDTITRRRPPLDFSGI) are Cytoplasmic-facing. Residues 1091 to 1110 (TSSGKDTITRRRPPLDFSGI) form a disordered region.

Belongs to the tospovirus envelope glycoprotein family. As to quaternary structure, homodimer; disulfide-linked. Heterodimer with Glycoprotein C. Interacts with nucleoprotein. In terms of assembly, heterodimer with Glycoprotein N. Interacts with nucleoprotein. Post-translationally, specific enzymatic cleavages in vivo yield mature proteins including Glycoprotein N and Glycoprotein C. Glycosylated with O-linked glycans. Glycosylation is essential for proper subcellular location. In terms of processing, cleaved at acidic pH.

Its subcellular location is the virion membrane. The protein localises to the host Golgi apparatus membrane. It localises to the host endoplasmic reticulum membrane. Its function is as follows. Forms the spikes present at the surface of the virion together with Glycoprotein C. They are able to attach the virion to a cell receptor and to promote fusion of membranes after endocytosis of the virion. Plays a role in virus binding and/or entry into the vector midgut. Forms the spikes present at the surface of the virion together with Glycoprotein N. They are able to attach the virion to a cell receptor and to promote fusion of membranes after endocytosis of the virion. Probable class II fusion protein. This Impatiens necrotic spot virus (INSV) protein is Envelopment polyprotein (GP).